The chain runs to 67 residues: Disintegrin EC3A (67 aa).

A Disintegrin domain is found at 1-65 (NSVHPCCDPV…DCPRNRYKGK (65 aa)). Cystine bridges form between Cys-6–Cys-29, Cys-20–Cys-26, Cys-25–Cys-50, and Cys-38–Cys-57. The Cell attachment site; atypical (VGD) signature appears at 42–44 (VGD).

This sequence belongs to the venom metalloproteinase (M12B) family. P-II subfamily. P-IIe sub-subfamily. As to quaternary structure, heterodimer with EC3B; disulfide-linked. Expressed by the venom gland.

The protein resides in the secreted. Inhibits adhesion of cells expressing alpha-4/beta-1 (ITGA4/ITGB1) and alpha-4/beta-7 (ITGA4/ITGB7) integrins to the natural ligands vascular cell adhesion molecule 1 (VCAM-1) and mucosal addressin cell adhesion molecule 1 (MADCAM-1). It is also a weaker inhibitor of alpha-5/beta-1 (ITGA5/ITGB1) and alpha-2b/beta-3 (ITGA2B/ITGB3) integrins. The inhibitory activity of EC3 towards alpha-4 integrins is associated with the MLD sequence of EC3B subunit. The ability of EC3 to inhibit ITGA5/ITGB1 resides in both subunits A and B. In Echis carinatus (Saw-scaled viper), this protein is Disintegrin EC3A.